Consider the following 664-residue polypeptide: Phosphomethylpyrimidine synthase (664 aa).

2 stretches are compositionally biased toward polar residues: residues 1 to 10 (MSTEPLSINP) and 17 to 27 (SATQEPSTSSK). The tract at residues 1 to 37 (MSTEPLSINPLSAKPLSATQEPSTSSKPSRREQRAAA) is disordered. Substrate is bound by residues Asn261, Met290, Tyr319, His355, 375 to 377 (SRG), 416 to 419 (DGLR), and Glu455. His459 provides a ligand contact to Zn(2+). Tyr482 contributes to the substrate binding site. His523 lines the Zn(2+) pocket. Positions 603, 606, and 611 each coordinate [4Fe-4S] cluster.

It belongs to the ThiC family. Homodimer. The cofactor is [4Fe-4S] cluster.

The catalysed reaction is 5-amino-1-(5-phospho-beta-D-ribosyl)imidazole + S-adenosyl-L-methionine = 4-amino-2-methyl-5-(phosphooxymethyl)pyrimidine + CO + 5'-deoxyadenosine + formate + L-methionine + 3 H(+). It functions in the pathway cofactor biosynthesis; thiamine diphosphate biosynthesis. Functionally, catalyzes the synthesis of the hydroxymethylpyrimidine phosphate (HMP-P) moiety of thiamine from aminoimidazole ribotide (AIR) in a radical S-adenosyl-L-methionine (SAM)-dependent reaction. The protein is Phosphomethylpyrimidine synthase of Pectobacterium atrosepticum (strain SCRI 1043 / ATCC BAA-672) (Erwinia carotovora subsp. atroseptica).